A 344-amino-acid chain; its full sequence is MIRKDLSQIPTYVPGKRNDHALKLSSNEVTHRPLPSAAQAMAEAAAGANRYPDMGVTELRGALSEHLGVPAEQIAVGCGSSALCQQLVQITCTPGDEVVFPWRSFEAYPIFVQVVGATPVAVPLTSDGFNDLDAMAAAITPKTKLVFVCNPNNPSGTVVRREAFLEFMAKVPADVVVALDEAYTEYVRDEDTIFATEILSEFPNLVGLRTFSKAFGLAGVRVGYAFGPHELIDALNKVALPFGVNAVGQAGALASLNNLDELMEHTEEVVAVRDRVADHIGAAHSQANFVWIPAESRSETPFEIAEKLAAHDVLVRAFPEGVRITVTNEEESDRLLAAWDASFA.

An N6-(pyridoxal phosphate)lysine modification is found at Lys213.

The protein belongs to the class-II pyridoxal-phosphate-dependent aminotransferase family. As to quaternary structure, homodimer. Pyridoxal 5'-phosphate serves as cofactor.

The catalysed reaction is an aromatic L-alpha-amino acid + 2-oxoglutarate = an aromatic oxo-acid + L-glutamate. In terms of biological role, aminotransferase that catalyzes the conversion of aromatic amino acids and 2-oxoglutarate into corresponding aromatic oxo acids and L-glutamate. This is Aromatic amino acid aminotransferase from Corynebacterium diphtheriae (strain ATCC 700971 / NCTC 13129 / Biotype gravis).